A 426-amino-acid polypeptide reads, in one-letter code: Glutamate-1-semialdehyde 2,1-aminomutase (426 aa).

Lys265 is subject to N6-(pyridoxal phosphate)lysine.

It belongs to the class-III pyridoxal-phosphate-dependent aminotransferase family. HemL subfamily. Homodimer. It depends on pyridoxal 5'-phosphate as a cofactor.

The protein localises to the cytoplasm. It carries out the reaction (S)-4-amino-5-oxopentanoate = 5-aminolevulinate. Its pathway is porphyrin-containing compound metabolism; protoporphyrin-IX biosynthesis; 5-aminolevulinate from L-glutamyl-tRNA(Glu): step 2/2. This chain is Glutamate-1-semialdehyde 2,1-aminomutase, found in Marinobacter nauticus (strain ATCC 700491 / DSM 11845 / VT8) (Marinobacter aquaeolei).